The chain runs to 512 residues: MEEYKVYLELDRSRQQDFLYPFIFQESIYGLVYGHDLNGSILVENVDYDNKSSLLIVKRLITRMYQQNHLIVSANDFNKNQQFWGYNKNLYSQIISEAFAIVVEIPFYSQLRSSLEGLEGAEVIKSYNKLRSIHAIFPFFEDKFTYLNYVSDVQIPYPIHLEILVQILRYWVKDPPLFHLLRSFLYQYCNWNSFINPKKSISSFSKSNPRFFFFLYNFYVCEYESIFLFLRKKSSHLRLTSFSVLFERIYFYAKIEHLVEVFPKDFLSTLSLFKDPLIHYLRYQGKSILASKNAPLLMNKWKYYLISLWQCYFNVWSQPGTIYINQLSDHSFHFFWGGYFSNVRLNLSVVRSQMLENSFLIEIVMKKLDTIVPILPIIRSLAKAKFCNVLGHPISKPVWADLSDFGIIDRFLRIRRNISHYYNGSSKKKSLYRIKYILRLSCIKTLVRKHKSTVRAFLKRLGSEELLKEFFTEEEDILSLIFPRASSTLQRLYGGRIWYLDIIFSNDLVNHS.

It belongs to the intron maturase 2 family. MatK subfamily.

It localises to the plastid. Its subcellular location is the chloroplast. In terms of biological role, usually encoded in the trnK tRNA gene intron. Probably assists in splicing its own and other chloroplast group II introns. This Dalea wrightii (Wright's prairie clover) protein is Maturase K.